The chain runs to 240 residues: Sugar fermentation stimulation protein homolog (240 aa).

This sequence belongs to the SfsA family.

This Crocosphaera subtropica (strain ATCC 51142 / BH68) (Cyanothece sp. (strain ATCC 51142)) protein is Sugar fermentation stimulation protein homolog.